The sequence spans 987 residues: SVPGPMGPSGPRGLPGPPGPGPQGFQGPPGEPGEPGSSGPMGPRGPPGPPGKNGDDGEAGKPGRPGERGPPGPQGARGLPGTAGLPGMKGHRGFSGLDGAKGDAGPAGPKGEPGSPGENGAPGQMGPRGLPGERGRPGASGPAGARGNDGAAGAAGPPGPTGPAGPPGFPGAVGAKGEAGPQGARGSEGPQGVRGEPGPPGPAGAAGPAGNPGADGQPGAKGANGAPGIAGAPGFPGARGPSGPQGPSGAPGPKGNSGEPGAPGNKGDTGAKGEPGPTGIQGPPGPAGEEGKRGARGEPGPTGLPGPPGERGGPGSRGFPGADGVAGPKGPAGERGSPGPAGPKGSPGEAGRPGEAGLPGAKGLTGSPGSPGPDGKTGPPGPAGQDGRPGPPGPPGARGQAGVMGFPGPKGAAGEPGKAGERGVPGPPGAVGPAGKDGEAGAQGPPGPAGPAGERGEQGPAPGFQGLPGPAGPPGEAGKPGEQGVPGDLGAPGPSGARGERGFPGERGVQGPPGPAGPRGSSQGAPGLQGMPGERGAAGLPGPKGDRGDAGPKGADGAPGKDGVRGLTGPIGPPGPAGAPGDKGESGPSGPAGPTGARGAPGDRGEPGPPGPAGFAGPPGADGQPGAKGEPGDAGAKGDAGPPGPAGPTGPPGPIGNVGAPGPKGARGSAGPPGATGFPGAAGRVGPPGPSGNAGPPGPPGPVGKEGGKGPRGETGPAGRPGEVGPPGPPGPGEKGSPGADGPAGAPGTPGPQGISGQRGVVGLPGQRGERGFPGLPGPSGEPGKQGPSGSSGERGPPGPMGPPGLAGPPGESGREGSPGAEGSPGRDGSPGPKGDRGESGPAGPPGAPGAPGAPGPVGPAGKSGDRGETGPAGPAGPAGPAGARGPAGPQGPRGDKGETGEQGDRGFSGLQGPAGPPGSPGEQGPSGASGPAGPRGPPGSAGSPGKDGLNGLPGPIGPPGPRGRTGDAGPVGPPGPPGPPGPPGPP.

The segment covering 1–21 has biased composition (pro residues); sequence SVPGPMGPSGPRGLPGPPGPG. Positions 1 to 987 are disordered; the sequence is SVPGPMGPSG…PGPPGPPGPP (987 aa). 4-hydroxyproline is present on residues P15, P18, P20, P29, P32, P35, P50, P65, P71, P80, and P86. Residues 23–41 show a composition bias toward low complexity; the sequence is QGFQGPPGEPGEPGSSGPM. Over residues 53-67 the composition is skewed to basic and acidic residues; the sequence is NGDDGEAGKPGRPGE. K89 carries the post-translational modification 5-hydroxylysine; alternate. O-linked (Gal...) hydroxylysine; alternate glycosylation is present at K89. Position 95 is a phosphoserine (S95). The segment covering 103 to 119 has biased composition (low complexity); the sequence is DAGPAGPKGEPGSPGEN. 16 positions are modified to 4-hydroxyproline: P113, P116, P122, P131, P137, P158, P167, P170, P197, P200, P212, P218, P227, P233, P236, and P251. Residues 137 to 155 are compositionally biased toward low complexity; that stretch reads PGASGPAGARGNDGAAGAA. Positions 157-169 are enriched in pro residues; that stretch reads PPGPTGPAGPPGF. The segment covering 203–253 has biased composition (low complexity); it reads AGAAGPAGNPGADGQPGAKGANGAPGIAGAPGFPGARGPSGPQGPSGAPGP. Residue K254 is modified to 5-hydroxylysine. A 4-hydroxyproline mark is found at P260, P263, P275, P284, P299, P305, P314, and P320. The span at 309 to 318 shows a compositional bias: gly residues; sequence GERGGPGSRG. Residue K329 is modified to 5-hydroxylysine. Residues P338, P347, P353, P359, P368, P371, P380, P389, P395, P407, P416, P425, P428, P446, P468, P474, P480, P486, P492, P504, P513, P526, P532, and P541 each carry the 4-hydroxyproline modification. Low complexity predominate over residues 362-388; sequence KGLTGSPGSPGPDGKTGPPGPAGQDGR. Residues 397-416 are compositionally biased toward low complexity; the sequence is ARGQAGVMGFPGPKGAAGEP. Over residues 458–483 the composition is skewed to low complexity; that stretch reads QGPAPGFQGLPGPAGPPGEAGKPGEQ. At K553 the chain carries 5-hydroxylysine. 3 positions are modified to 4-hydroxyproline: P559, P574, and P580. Positions 586 to 600 are enriched in low complexity; that stretch reads SGPSGPAGPTGARGA. S589 is subject to Phosphoserine. A 4-hydroxyproline mark is found at P601, P607, P610, P619, P625, P643, P652, and P661. Over residues 613 to 640 the composition is skewed to low complexity; it reads AGFAGPPGADGQPGAKGEPGDAGAKGDA. The segment covering 642–654 has biased composition (pro residues); sequence PPGPAGPTGPPGP. At K664 the chain carries 5-hydroxylysine. Residues 669–685 show a composition bias toward low complexity; that stretch reads SAGPPGATGFPGAAGRV. P673 and P679 each carry 4-hydroxyproline. Residue P687 is modified to 3-hydroxyproline. A 4-hydroxyproline mark is found at P688, P697, P700, P721, P730, P738, P747, P765, P774, P777, P783, P798, P804, P810, P819, and P825. Residues 714–723 are compositionally biased toward low complexity; sequence ETGPAGRPGE. Residues 735 to 747 show a composition bias toward low complexity; it reads KGSPGADGPAGAP. Residues 797 to 807 show a composition bias toward pro residues; the sequence is PPGPMGPPGLA. Over residues 809–824 the composition is skewed to low complexity; it reads PPGESGREGSPGAEGS. Residue K834 is modified to 5-hydroxylysine. A compositionally biased stretch (pro residues) spans 843-858; sequence AGPPGAPGAPGAPGPV. 4-hydroxyproline is present on residues P846, P849, and P852. Over residues 879–893 the composition is skewed to low complexity; that stretch reads AGPAGARGPAGPQGP. Over residues 894-905 the composition is skewed to basic and acidic residues; it reads RGDKGETGEQGD. K897 bears the 5-hydroxylysine mark. Residues P918, P921, P939, and P954 each carry the 4-hydroxyproline modification. The span at 921–954 shows a compositional bias: low complexity; it reads PGEQGPSGASGPAGPRGPPGSAGSPGKDGLNGLP. The residue at position 959 (P959) is a 3-hydroxyproline. P960 carries the post-translational modification 4-hydroxyproline. The segment covering 972–987 has biased composition (pro residues); sequence VGPPGPPGPPGPPGPP. A 3-hydroxyproline modification is found at P974. 4-hydroxyproline is present on P975. Position 977 is a 3-hydroxyproline (P977). At P978 the chain carries 4-hydroxyproline. P980 bears the 3-hydroxyproline mark. 4-hydroxyproline occurs at positions 981, 984, and 987.

It belongs to the fibrillar collagen family. As to quaternary structure, trimers of one alpha 2(I) and two alpha 1(I) chains. Post-translationally, contains mostly 4-hydroxyproline. Proline residues at the third position of the tripeptide repeating unit (G-X-Y) are hydroxylated in some or all of the chains. In terms of processing, contains 3-hydroxyproline at a few sites. This modification occurs on the first proline residue in the sequence motif Gly-Pro-Hyp, where Hyp is 4-hydroxyproline. Lysine residues at the third position of the tripeptide repeating unit (G-X-Y) are 5-hydroxylated in some or all of the chains. Post-translationally, O-glycosylated on hydroxylated lysine residues. The O-linked glycan consists of a Glc-Gal disaccharide. In terms of tissue distribution, expressed in bones.

Its subcellular location is the secreted. The protein localises to the extracellular space. It localises to the extracellular matrix. Type I collagen is a member of group I collagen (fibrillar forming collagen). The sequence is that of Collagen alpha-1(I) chain from Glossotherium robustum (Ground sloth).